Here is a 218-residue protein sequence, read N- to C-terminus: Histone H1 (218 aa).

Positions 1–19 (MSETAPVAAPAVSAPGAKA) are enriched in low complexity. Disordered regions lie at residues 1-42 (MSET…PSVT) and 89-218 (VSKG…TKKK). Residue Ser-2 is modified to N-acetylserine. The 74-residue stretch at 37-110 (AGPSVTELIT…GASGSFKLNK (74 aa)) folds into the H15 domain. Composition is skewed to basic residues over residues 118–133 (KATK…KPAA), 141–158 (KKPK…KAKK), 166–184 (KAAK…KKTA), and 191–218 (KAVK…TKKK).

This sequence belongs to the histone H1/H5 family.

It is found in the nucleus. The protein localises to the chromosome. Its function is as follows. Histones H1 are necessary for the condensation of nucleosome chains into higher-order structures. The sequence is that of Histone H1 from Gallus gallus (Chicken).